Consider the following 158-residue polypeptide: Succinate dehydrogenase [ubiquinone] cytochrome b small subunit B, mitochondrial (158 aa).

The N-terminal 29 residues, 1-29 (MAALVRISSLCHRGVSPLLFRPSSLIRPL), are a transit peptide targeting the mitochondrion. At 30–62 (AVQQKDHDCSYLISARIHATPSNYAGSGSKAAT) the chain is on the mitochondrial matrix side. Residues 63–84 (MHWTGERILSIALLSLAPVAYF) form a helical membrane-spanning segment. Residues 85–89 (CPSPA) lie on the Mitochondrial intermembrane side of the membrane. Residues 90–110 (VDYSLAAALTLHGHWGLGQVV) traverse the membrane as a helical segment. His-101 is a heme b binding site. The Mitochondrial matrix portion of the chain corresponds to 111–119 (TDYVHGDAK). Position 113 (Tyr-113) interacts with a ubiquinone. Residues 120 to 141 (IKMANAGLFVLSTVTFAGLCYF) traverse the membrane as a helical segment. Residues 142-158 (NYHDVGICKAVALLWSK) are Mitochondrial intermembrane-facing.

The protein belongs to the CybS family. Component of complex II composed of four subunits: the flavoprotein (FP) SDHA, iron-sulfur protein (IP) SDHB, and a cytochrome b560 composed of SDHC and SDHD.

The protein resides in the mitochondrion inner membrane. Its pathway is carbohydrate metabolism; tricarboxylic acid cycle. Its function is as follows. Membrane-anchoring subunit of succinate dehydrogenase (SDH) that is involved in complex II of the mitochondrial electron transport chain and is responsible for transferring electrons from succinate to ubiquinone (coenzyme Q). SDH also oxidizes malate to the non-canonical enol form of oxaloacetate, enol-oxaloacetate. Enol-oxaloacetate, which is a potent inhibitor of the succinate dehydrogenase activity, is further isomerized into keto-oxaloacetate. This chain is Succinate dehydrogenase [ubiquinone] cytochrome b small subunit B, mitochondrial (sdhdb), found in Danio rerio (Zebrafish).